A 927-amino-acid chain; its full sequence is Heat shock protein hsp98 (927 aa).

A Clp R domain is found at 2-162 (TSKMEFTDRA…TDAIQAIRGT (161 aa)). Repeat regions lie at residues 7-87 (FTDR…LVRL) and 99-162 (MAPS…IRGT). The NBD1 stretch occupies residues 179-428 (LAKFTIDMTA…AVRVARESQP (250 aa)). An ATP-binding site is contributed by 224-231 (GEPGVGKT). The stretch at 429 to 553 (EIIDSLERKL…AALNAAAAET (125 aa)) forms a coiled coil. The segment at 454 to 473 (EASKARLEQAKKDAENVEEE) is disordered. Residues 562–752 (VGPDQINEIV…IVVMTSNLGA (191 aa)) are NBD2. 635-642 (GPSGTGKT) is a binding site for ATP. The tract at residues 908-927 (EDAVDEVAPESEMDEDLYDD) is disordered.

Belongs to the ClpA/ClpB family. As to quaternary structure, homohexamer, forming a ring with a central pore.

It is found in the cytoplasm. The protein resides in the nucleus. Its function is as follows. Required, in concert with Hsp40 and Hsp70 and small Hsps, for the dissociation, resolubilization and refolding of aggregates of damaged proteins after heat or other environmental stresses. Extracts proteins from aggregates by unfolding and threading them in an ATP-dependent process through the axial channel of the protein hexamer, after which they can be refolded by components of the Hsp70/Hsp40 chaperone system. The chain is Heat shock protein hsp98 (hsp98) from Neurospora crassa (strain ATCC 24698 / 74-OR23-1A / CBS 708.71 / DSM 1257 / FGSC 987).